The chain runs to 168 residues: uncharacterized protein (168 aa).

Low complexity predominate over residues 1-15 (MKRIISSSKSLKQLS). The tract at residues 1-107 (MKRIISSSKS…NNNNNNNNNN (107 aa)) is disordered. Residues 33 to 47 (SDSDSDSDSDSDSDS) are compositionally biased toward acidic residues. Over residues 48–107 (DSNSNSNSNSNSNSNSNSNSNSNSNSNNNNNNTNNNNNNNNNNNNNNNNNNNNNNNNNNN) the composition is skewed to low complexity.

This is an uncharacterized protein from Dictyostelium discoideum (Social amoeba).